A 453-amino-acid chain; its full sequence is Carbamoyl phosphate synthase arginine-specific small chain (453 aa).

A mitochondrion-targeting transit peptide spans 1–28 (MFARVFKAMPARASALTSVNASIQARFM). In terms of domain architecture, Glutamine amidotransferase type-1 spans 219 to 406 (HVAVIDCGVK…IDSVKKYKAS (188 aa)). The Nucleophile role is filled by Cys295. Residues His379 and Glu381 contribute to the active site.

This sequence belongs to the CarA family. Heterodimer composed of 2 chains; the small (or glutamine) chain promotes the hydrolysis of glutamine to ammonia, which is used by the large (or ammonia) chain to synthesize carbamoyl phosphate.

The protein resides in the mitochondrion matrix. It catalyses the reaction hydrogencarbonate + L-glutamine + 2 ATP + H2O = carbamoyl phosphate + L-glutamate + 2 ADP + phosphate + 2 H(+). It carries out the reaction L-glutamine + H2O = L-glutamate + NH4(+). It participates in amino-acid biosynthesis; L-arginine biosynthesis; carbamoyl phosphate from bicarbonate: step 1/1. Its function is as follows. Small subunit of the arginine-specific carbamoyl phosphate synthase (CPSase). CPSase catalyzes the formation of carbamoyl phosphate from the ammonia moiety of glutamine, carbonate, and phosphate donated by ATP, the first step of the arginine biosynthetic pathway. The small subunit (glutamine amidotransferase) binds and cleaves glutamine to supply the large subunit with the substrate ammonia. The protein is Carbamoyl phosphate synthase arginine-specific small chain (cpa1) of Neosartorya fischeri (strain ATCC 1020 / DSM 3700 / CBS 544.65 / FGSC A1164 / JCM 1740 / NRRL 181 / WB 181) (Aspergillus fischerianus).